The following is a 214-amino-acid chain: ATP phosphoribosyltransferase (214 aa).

Belongs to the ATP phosphoribosyltransferase family. Short subfamily. Heteromultimer composed of HisG and HisZ subunits.

Its subcellular location is the cytoplasm. The catalysed reaction is 1-(5-phospho-beta-D-ribosyl)-ATP + diphosphate = 5-phospho-alpha-D-ribose 1-diphosphate + ATP. It functions in the pathway amino-acid biosynthesis; L-histidine biosynthesis; L-histidine from 5-phospho-alpha-D-ribose 1-diphosphate: step 1/9. Its function is as follows. Catalyzes the condensation of ATP and 5-phosphoribose 1-diphosphate to form N'-(5'-phosphoribosyl)-ATP (PR-ATP). Has a crucial role in the pathway because the rate of histidine biosynthesis seems to be controlled primarily by regulation of HisG enzymatic activity. The sequence is that of ATP phosphoribosyltransferase from Marinobacter nauticus (strain ATCC 700491 / DSM 11845 / VT8) (Marinobacter aquaeolei).